Reading from the N-terminus, the 366-residue chain is Endophilin-A (366 aa).

In terms of domain architecture, BAR spans 18–248 (TEKMGGAEGT…LQEKRSEAES (231 aa)). The stretch at 227-247 (QCADVLRGLQETLQEKRSEAE) forms a coiled coil. The interval 266-295 (GGGGGLNEDGTPSHISSSASPLPSPMRSPA) is disordered. Positions 277-294 (PSHISSSASPLPSPMRSP) are enriched in low complexity. Residues 305–364 (QQQPCCQALYDFDPENPGELGFKENDIITLLNRVDDNWYEGSVNGRTGYFPQSYVQVQVP) form the SH3 domain.

This sequence belongs to the endophilin family.

The protein localises to the cytoplasm. Its subcellular location is the membrane. In terms of biological role, required presynaptically at the neuromuscular junction. Implicated in synaptic vesicle endocytosis. This is Endophilin-A from Drosophila willistoni (Fruit fly).